The chain runs to 525 residues: Glutamate--cysteine ligase (525 aa).

It belongs to the glutamate--cysteine ligase type 1 family. Type 1 subfamily.

It carries out the reaction L-cysteine + L-glutamate + ATP = gamma-L-glutamyl-L-cysteine + ADP + phosphate + H(+). It functions in the pathway sulfur metabolism; glutathione biosynthesis; glutathione from L-cysteine and L-glutamate: step 1/2. The polypeptide is Glutamate--cysteine ligase (Pseudomonas putida (strain ATCC 47054 / DSM 6125 / CFBP 8728 / NCIMB 11950 / KT2440)).